A 360-amino-acid polypeptide reads, in one-letter code: Mannose-1-phosphate guanylyltransferase catalytic subunit beta (360 aa).

Residues Lys2–Pro222 are substrate-binding domain. Asp110 contacts GDP-alpha-D-mannose. Residue Asp110 coordinates Mg(2+). The active site involves Lys162. Asp218 contacts GDP-alpha-D-mannose. Asp218 lines the Mg(2+) pocket. Residues Cys245–Met360 form a hexapeptide repeat domain region.

It belongs to the transferase hexapeptide repeat family. Component of the GMPPA-GMPPB mannose-1-phosphate guanylyltransferase complex composed of 4 GMPPA subunits and 8 GMPPB subunits; the complex is organized into three layers, a central layer made up of 2 GMPPA dimers sandwiched between two layers each made up of 2 GMPPB dimers. GMPPB catalytic activity is reduced when part of the complex and binding of GDP-alpha-D-Mannose by GMPPA induces allosteric feedback inhibition of GMPPB. It depends on Mg(2+) as a cofactor. In terms of tissue distribution, expressed in the liver (at protein level).

The protein resides in the cytoplasm. It carries out the reaction alpha-D-mannose 1-phosphate + GTP + H(+) = GDP-alpha-D-mannose + diphosphate. Its pathway is nucleotide-sugar biosynthesis; GDP-alpha-D-mannose biosynthesis; GDP-alpha-D-mannose from alpha-D-mannose 1-phosphate (GTP route): step 1/1. Enzyme activity is reduced by incorporation into the GMPPA-GMPPB mannose-1-phosphate guanylyltransferase complex. Allosterically inhibited, when part of the GMPPA-GMPPB complex, by GDP-alpha-D-mannose binding to GMPPA. Functionally, catalytic subunit of the GMPPA-GMPPB mannose-1-phosphate guanylyltransferase complex. Catalyzes the formation of GDP-mannose, an essential precursor of glycan moieties of glycoproteins and glycolipids. Can catalyze the reverse reaction in vitro. Together with GMPPA regulates GDP-alpha-D-mannose levels. The protein is Mannose-1-phosphate guanylyltransferase catalytic subunit beta of Sus scrofa (Pig).